A 187-amino-acid chain; its full sequence is Adenylate kinase (187 aa).

10–15 is a binding site for ATP; sequence GSGKGT. An NMP region spans residues 30 to 59; it reads STGDLLRAEVAAGSPLGLKAKEVMARGDLV. Residues Thr31, Arg36, 57 to 59, 85 to 88, and Gln92 contribute to the AMP site; these read DLV and GYPR. The LID stretch occupies residues 126-136; that stretch reads GRAKAEGREDD. Arg127 is an ATP binding site. AMP is bound by residues Arg133 and Arg144. Gly172 provides a ligand contact to ATP.

Belongs to the adenylate kinase family. As to quaternary structure, monomer.

It is found in the cytoplasm. It catalyses the reaction AMP + ATP = 2 ADP. It participates in purine metabolism; AMP biosynthesis via salvage pathway; AMP from ADP: step 1/1. Functionally, catalyzes the reversible transfer of the terminal phosphate group between ATP and AMP. Plays an important role in cellular energy homeostasis and in adenine nucleotide metabolism. This is Adenylate kinase from Xanthomonas oryzae pv. oryzae (strain MAFF 311018).